The following is a 733-amino-acid chain: FYVE, RhoGEF and PH domain-containing protein 3 (733 aa).

Polar residues-rich tracts occupy residues 1–11 (MELGRSSSTPQ), 47–60 (HSSS…STRE), and 106–117 (ETASDSRVPQDN). Residues 1–134 (MELGRSSSTP…GVGEEPDPKV (134 aa)) are disordered. Over residues 118–129 (PQEEEDSGVGEE) the composition is skewed to acidic residues. At S124 the chain carries Phosphoserine. In terms of domain architecture, DH spans 153–337 (KLLHIAQELL…STAADHSNAA (185 aa)). Residues 366 to 465 (ELIKEGSIQK…WIQVIQATVE (100 aa)) enclose the PH 1 domain. Residues 481–535 (CSQDEEPTLSPDQPVMSTSSVEPAGVADSNGGTPGIESRKSSSKTRRDKEKPGCK) are disordered. A compositionally biased stretch (basic and acidic residues) spans 517 to 533 (ESRKSSSKTRRDKEKPG). An FYVE-type zinc finger spans residues 528–584 (DKEKPGCKSCGETFNSITKRRYRCKLCGEVICRKCSEFKAENSKQSRVCRECFLEEP). Zn(2+)-binding residues include C534, C537, C551, C554, C559, C562, C576, and C579. Disordered stretches follow at residues 586 to 612 (VPPS…DPRP) and 712 to 733 (GDTA…TDTP). One can recognise a PH 2 domain in the interval 612-711 (PSLLCGTLNL…WLKALGTAVH (100 aa)). T732 carries the phosphothreonine modification.

Detected in adult brain, spleen, lung and skeletal muscle. Detected in embryos from 7 dpc to 17 dpc.

It is found in the cytoplasm. The protein resides in the cytoskeleton. Functionally, promotes the formation of filopodia. May activate CDC42, a member of the Ras-like family of Rho- and Rac proteins, by exchanging bound GDP for free GTP. Plays a role in regulating the actin cytoskeleton and cell shape. This chain is FYVE, RhoGEF and PH domain-containing protein 3 (Fgd3), found in Mus musculus (Mouse).